The following is a 212-amino-acid chain: Probable GTP-binding protein EngB (212 aa).

One can recognise an EngB-type G domain in the interval 25 to 199 (FGYEVAFAGR…WAKLDEWMEY (175 aa)). Residues 33 to 40 (GRSNAGKS), 60 to 64 (GRTQL), 78 to 81 (DLPG), 145 to 148 (TKSD), and 178 to 180 (FSS) each bind GTP. Mg(2+) is bound by residues S40 and T62.

This sequence belongs to the TRAFAC class TrmE-Era-EngA-EngB-Septin-like GTPase superfamily. EngB GTPase family. It depends on Mg(2+) as a cofactor.

Functionally, necessary for normal cell division and for the maintenance of normal septation. The protein is Probable GTP-binding protein EngB of Hydrogenovibrio crunogenus (strain DSM 25203 / XCL-2) (Thiomicrospira crunogena).